The chain runs to 201 residues: ATP-dependent Clp protease proteolytic subunit (201 aa).

Ser98 serves as the catalytic Nucleophile. Residue His123 is part of the active site.

The protein belongs to the peptidase S14 family. Fourteen ClpP subunits assemble into 2 heptameric rings which stack back to back to give a disk-like structure with a central cavity, resembling the structure of eukaryotic proteasomes.

The protein localises to the cytoplasm. It catalyses the reaction Hydrolysis of proteins to small peptides in the presence of ATP and magnesium. alpha-casein is the usual test substrate. In the absence of ATP, only oligopeptides shorter than five residues are hydrolyzed (such as succinyl-Leu-Tyr-|-NHMec, and Leu-Tyr-Leu-|-Tyr-Trp, in which cleavage of the -Tyr-|-Leu- and -Tyr-|-Trp bonds also occurs).. Functionally, cleaves peptides in various proteins in a process that requires ATP hydrolysis. Has a chymotrypsin-like activity. Plays a major role in the degradation of misfolded proteins. This is ATP-dependent Clp protease proteolytic subunit from Neorickettsia sennetsu (strain ATCC VR-367 / Miyayama) (Ehrlichia sennetsu).